Consider the following 403-residue polypeptide: Aloesone synthase (403 aa).

The active site involves Cys-174. Residues Ser-281 and 318-321 each bind CoA; that span reads GGRA.

Belongs to the thiolase-like superfamily. Chalcone/stilbene synthases family. As to quaternary structure, homodimer.

It participates in secondary metabolite biosynthesis; flavonoid biosynthesis. Catalyzes the iterative condensations of 6, 7 or 8 molecules of malonyl-CoA to produce various aromatic polyketides. Produces the heptaketide aloesone, the aglycone of aloesin, from 7 molecules of malonyl-CoA as a major product. Also able to produce a hexaketide pyrone, a heptaketide 6-(2-acetyl-3,5-dihydroxybenzyl)-4-hydroxy-2-pyrone, a novel heptaketide 6-(2-(2,4-dihydroxy-6-methylphenyl)-2-oxoethyl)-4-hydroxy-2-pyrone and octaketides SEK4/SEK4b. This is Aloesone synthase (PKS3) from Aloe arborescens (Kidachi aloe).